We begin with the raw amino-acid sequence, 609 residues long: 2',5'-phosphodiesterase 12 (609 aa).

The N-terminal 16 residues, 1 to 16 (MWRLPGVRAALRGVRT), are a transit peptide targeting the mitochondrion. Positions 203–231 (PRAAEPEGGGPSSSSPSSPSPGWTETGVD) are disordered. A compositionally biased stretch (low complexity) spans 214 to 224 (SSSSPSSPSPG). Ser-217 bears the Phosphoserine mark. Positions 351, 496, and 498 each coordinate Mg(2+). Asp-496 serves as the catalytic Proton donor/acceptor.

Belongs to the CCR4/nocturin family. It depends on Mg(2+) as a cofactor. As to expression, liver.

The protein resides in the mitochondrion matrix. It carries out the reaction Exonucleolytic cleavage of poly(A) to 5'-AMP.. Its function is as follows. Enzyme that cleaves 2',5'-phosphodiester bond linking adenosines of the 5'-triphosphorylated oligoadenylates, triphosphorylated oligoadenylates referred as 2-5A modulates the 2-5A system. Degrades triphosphorylated 2-5A to produce AMP and ATP. Also cleaves 3',5'-phosphodiester bond of oligoadenylates. Plays a role as a negative regulator of the 2-5A system that is one of the major pathways for antiviral and antitumor functions induced by interferons (IFNs). Suppression of this enzyme increases cellular 2-5A levels and decreases viral replication in cultured small-airway epithelial cells. This Bos taurus (Bovine) protein is 2',5'-phosphodiesterase 12 (PDE12).